Consider the following 186-residue polypeptide: Ribosome-recycling factor (186 aa).

This sequence belongs to the RRF family.

It localises to the cytoplasm. Functionally, responsible for the release of ribosomes from messenger RNA at the termination of protein biosynthesis. May increase the efficiency of translation by recycling ribosomes from one round of translation to another. The chain is Ribosome-recycling factor from Cupriavidus pinatubonensis (strain JMP 134 / LMG 1197) (Cupriavidus necator (strain JMP 134)).